A 568-amino-acid chain; its full sequence is MTLRLSRRAYAEMFGPTTGDRIRLADTELLIEVERDHTLYGEEVKFGGGKVIRDGMGQSQLPAADVADTVITNAVILDHWGIVKADIAIKHGRIAAIGKAGNPDIQPGVTIAIGAATEIIAGEGLIVTAGGIDTHIHFISPQQIDEALASGVTTMIGGGTGPATGTNATTCTPGPWHMERMLQAADGWPINLGFLGKGNASRPQPLVEQIEAGAIGLKLHEDWGTTPAAIDNCLTVADDTDTQVAIHTDTLNEAGFVEATVAAFKGRTIHTYHTEGAGGGHAPDILKVCGEANVLPSSTNPTRPYTINTLDEHLDMLMVCHHLDPSIAEDLAFAESRIRRETIAAEDILHDLGALSMLSSDSQAMGRVGEVIIRTWQTAHKMKVQRGALTGDGARNDNFRAKRYVAKYTINPALTHGIAHEVGSIEPGKWADLVLWEPAFFGVKPAMIVKGGMIAVAQMGDPNASIPTPQPVHYREMFATRGGALARTSLTFVSQLALDAGISARYGLAKRLVPVRGCRTVTKRDMIHNAWQPAIRVDPETYDVVADGALLTCEPAAVLPMAQRYFLF.

Positions 130–568 constitute a Urease domain; sequence GGIDTHIHFI…LPMAQRYFLF (439 aa). Residues His-135, His-137, and Lys-218 each coordinate Ni(2+). Lys-218 carries the post-translational modification N6-carboxylysine. His-220 provides a ligand contact to substrate. Residues His-247 and His-273 each contribute to the Ni(2+) site. His-321 functions as the Proton donor in the catalytic mechanism. Ni(2+) is bound at residue Asp-361.

This sequence belongs to the metallo-dependent hydrolases superfamily. Urease alpha subunit family. As to quaternary structure, heterotrimer of UreA (gamma), UreB (beta) and UreC (alpha) subunits. Three heterotrimers associate to form the active enzyme. Requires Ni cation as cofactor. In terms of processing, carboxylation allows a single lysine to coordinate two nickel ions.

It is found in the cytoplasm. The enzyme catalyses urea + 2 H2O + H(+) = hydrogencarbonate + 2 NH4(+). The protein operates within nitrogen metabolism; urea degradation; CO(2) and NH(3) from urea (urease route): step 1/1. This is Urease subunit alpha from Burkholderia pseudomallei (strain 1106a).